The sequence spans 634 residues: DNA-directed RNA polymerase subunit gamma (634 aa).

Zn(2+)-binding residues include Cys-74, Cys-76, Cys-89, and Cys-92. Mg(2+)-binding residues include Asp-471, Asp-473, and Asp-475.

It belongs to the RNA polymerase beta' chain family. RpoC1 subfamily. As to quaternary structure, in cyanobacteria the RNAP catalytic core is composed of 2 alpha, 1 beta, 1 beta', 1 gamma and 1 omega subunit. When a sigma factor is associated with the core the holoenzyme is formed, which can initiate transcription. It depends on Mg(2+) as a cofactor. Zn(2+) is required as a cofactor.

It catalyses the reaction RNA(n) + a ribonucleoside 5'-triphosphate = RNA(n+1) + diphosphate. In terms of biological role, DNA-dependent RNA polymerase catalyzes the transcription of DNA into RNA using the four ribonucleoside triphosphates as substrates. In Prochlorococcus marinus (strain MIT 9312), this protein is DNA-directed RNA polymerase subunit gamma.